Consider the following 533-residue polypeptide: DNA-directed RNA polymerase III subunit RPC3 (533 aa).

A disordered region spans residues 162-181; the sequence is LVPDTDSSDRGPPPPAPTLV. Position 194 is a phosphoserine (Ser194). The tract at residues 197 to 228 is disordered; sequence GKGKRRRSSDEDATGEPKAKKPRYTDNKEPSP. A compositionally biased stretch (basic and acidic residues) spans 211–227; the sequence is GEPKAKKPRYTDNKEPS.

The protein belongs to the eukaryotic RPC3/POLR3C RNA polymerase subunit family. In terms of assembly, component of the RNA polymerase III complex consisting of 17 subunits: a ten-subunit horseshoe-shaped catalytic core composed of POLR3A/RPC1, POLR3B/RPC2, POLR1C/RPAC1, POLR1D/RPAC2, POLR3K/RPC10, POLR2E/RPABC1, POLR2F/RPABC2, POLR2H/RPABC3, POLR2K/RPABC4 and POLR2L/RPABC5; a mobile stalk composed of two subunits POLR3H/RPC8 and CRCP/RPC9, protruding from the core and functioning primarily in transcription initiation; and additional subunits homologous to general transcription factors of the RNA polymerase II machinery, POLR3C/RPC3-POLR3F/RPC6-POLR3G/RPC7 heterotrimer required for transcription initiation and POLR3D/RPC4-POLR3E/RPC5 heterodimer involved in both transcription initiation and termination. Directly interacts with POLR3G/RPC7 and POLR3GL. Directly interacts with POLR3F/RPC6. Interacts with GTF3C4. As part of the RNA polymerase III complex, interacts with PKP2.

Its subcellular location is the nucleus. Functionally, DNA-dependent RNA polymerase catalyzes the transcription of DNA into RNA using the four ribonucleoside triphosphates as substrates. Specific peripheric component of RNA polymerase III (Pol III) which synthesizes small non-coding RNAs including 5S rRNA, snRNAs, tRNAs and miRNAs from at least 500 distinct genomic loci. Part of POLR3C/RPC3-POLR3F/RPC6-POLR3G/RPC7 heterotrimer, coordinates the dynamics of Pol III stalk and clamp modules during the transition from apo to elongation state. Pol III plays a key role in sensing and limiting infection by intracellular bacteria and DNA viruses. Acts as a nuclear and cytosolic DNA sensor involved in innate immune response. Can sense non-self dsDNA that serves as template for transcription into dsRNA. The non-self RNA polymerase III transcripts, such as Epstein-Barr virus-encoded RNAs (EBERs) induce type I interferon and NF-kappa-B through the RIG-I pathway. Preferentially binds single-stranded DNA (ssDNA) in a sequence-independent manner. The protein is DNA-directed RNA polymerase III subunit RPC3 of Mus musculus (Mouse).